A 505-amino-acid polypeptide reads, in one-letter code: ATP synthase subunit alpha (505 aa).

171-178 (GDRQTGKT) lines the ATP pocket.

It belongs to the ATPase alpha/beta chains family. As to quaternary structure, F-type ATPases have 2 components, CF(1) - the catalytic core - and CF(0) - the membrane proton channel. CF(1) has five subunits: alpha(3), beta(3), gamma(1), delta(1), epsilon(1). CF(0) has three main subunits: a(1), b(2) and c(9-12). The alpha and beta chains form an alternating ring which encloses part of the gamma chain. CF(1) is attached to CF(0) by a central stalk formed by the gamma and epsilon chains, while a peripheral stalk is formed by the delta and b chains.

The protein localises to the cell inner membrane. It carries out the reaction ATP + H2O + 4 H(+)(in) = ADP + phosphate + 5 H(+)(out). In terms of biological role, produces ATP from ADP in the presence of a proton gradient across the membrane. The alpha chain is a regulatory subunit. In Campylobacter fetus subsp. fetus (strain 82-40), this protein is ATP synthase subunit alpha.